We begin with the raw amino-acid sequence, 119 residues long: Aspartate 1-decarboxylase (119 aa).

Serine 25 (schiff-base intermediate with substrate; via pyruvic acid) is an active-site residue. Pyruvic acid (Ser) is present on serine 25. Threonine 57 provides a ligand contact to substrate. Tyrosine 58 serves as the catalytic Proton donor. 73–75 (GAA) contacts substrate.

It belongs to the PanD family. Heterooctamer of four alpha and four beta subunits. The cofactor is pyruvate. In terms of processing, is synthesized initially as an inactive proenzyme, which is activated by self-cleavage at a specific serine bond to produce a beta-subunit with a hydroxyl group at its C-terminus and an alpha-subunit with a pyruvoyl group at its N-terminus.

The protein localises to the cytoplasm. It catalyses the reaction L-aspartate + H(+) = beta-alanine + CO2. It functions in the pathway cofactor biosynthesis; (R)-pantothenate biosynthesis; beta-alanine from L-aspartate: step 1/1. Functionally, catalyzes the pyruvoyl-dependent decarboxylation of aspartate to produce beta-alanine. The protein is Aspartate 1-decarboxylase of Desulfotalea psychrophila (strain LSv54 / DSM 12343).